A 58-amino-acid chain; its full sequence is Probable mRNA interferase HicA 2 (58 aa).

This sequence belongs to the HicA mRNA interferase family. As to quaternary structure, probably forms a complex with the cognate antitoxin HicB 2 which inhibits the mRNA interferase activity.

Functionally, toxic component of a type II toxin-antitoxin (TA) system. A probable translation-independent mRNA interferase. The protein is Probable mRNA interferase HicA 2 (hicA2) of Photorhabdus laumondii subsp. laumondii (strain DSM 15139 / CIP 105565 / TT01) (Photorhabdus luminescens subsp. laumondii).